A 204-amino-acid chain; its full sequence is Ras-related and estrogen-regulated growth inhibitor-like protein (204 aa).

The small GTPase-like stretch occupies residues 1–204; sequence MNDVKLTVLG…NVFGKRRKSV (204 aa). Residues 10-17, 57-63, and 122-125 each bind GTP; these read GGEGTGKS, DPCSQPQ, and NKQD.

This sequence belongs to the small GTPase superfamily. Ras family.

It catalyses the reaction GTP + H2O = GDP + phosphate + H(+). Binds GDP/GTP and may possess intrinsic GTPase activity. The sequence is that of Ras-related and estrogen-regulated growth inhibitor-like protein (RERGL) from Bos taurus (Bovine).